Reading from the N-terminus, the 254-residue chain is Phosphate import ATP-binding protein PstB (254 aa).

Residues 9–249 enclose the ABC transporter domain; that stretch reads MSVKDLDLFY…PVDKRTEDYI (241 aa). An ATP-binding site is contributed by 41 to 48; sequence GPSGCGKS.

This sequence belongs to the ABC transporter superfamily. Phosphate importer (TC 3.A.1.7) family. In terms of assembly, the complex is composed of two ATP-binding proteins (PstB), two transmembrane proteins (PstC and PstA) and a solute-binding protein (PstS).

The protein resides in the cell membrane. The enzyme catalyses phosphate(out) + ATP + H2O = ADP + 2 phosphate(in) + H(+). Its function is as follows. Part of the ABC transporter complex PstSACB involved in phosphate import. Responsible for energy coupling to the transport system. This is Phosphate import ATP-binding protein PstB from Clostridioides difficile (strain 630) (Peptoclostridium difficile).